The chain runs to 133 residues: UPF0146 protein MTH_1000 (133 aa).

This sequence belongs to the UPF0146 family.

This is UPF0146 protein MTH_1000 from Methanothermobacter thermautotrophicus (strain ATCC 29096 / DSM 1053 / JCM 10044 / NBRC 100330 / Delta H) (Methanobacterium thermoautotrophicum).